A 186-amino-acid chain; its full sequence is ADP-ribosylation factor-like protein 8B-A (186 aa).

The note=Mediates targeting to membranes intramembrane region spans 1 to 19 (MLALINRLLDWFKSLFWKE). GTP is bound by residues 29-35 (QYSGKTT), 71-75 (DIGGQ), and 130-133 (NKRD).

The protein belongs to the small GTPase superfamily. Arf family.

It localises to the late endosome membrane. It is found in the lysosome membrane. The protein resides in the cytoplasm. The protein localises to the cytoskeleton. Its subcellular location is the spindle. It localises to the early endosome membrane. Small GTPase which cycles between active GTP-bound and inactive GDP-bound states. In its active state, binds to a variety of effector proteins playing a key role in the regulation of lysosomal positioning which is important for nutrient sensing, natural killer cell-mediated cytotoxicity and antigen presentation. Along with its effectors, orchestrates lysosomal transport and fusion. This chain is ADP-ribosylation factor-like protein 8B-A (arl8ba), found in Danio rerio (Zebrafish).